A 122-amino-acid chain; its full sequence is MVPGPPESVVRFFLWFCFLLPPTRKASCDPRDLKSCNRPCVWSRLLKPNSSLSNLETAYFPQILRFLRPWYFSRSHLNYHQKAPARWEWLYSIYRKGTKAQRRNVLRSPCAPPQPSWPCSVI.

An N-terminal signal peptide occupies residues 1–28; it reads MVPGPPESVVRFFLWFCFLLPPTRKASC. Residue Asn49 is glycosylated (N-linked (GlcNAc...) asparagine).

The protein localises to the secreted. This is an uncharacterized protein from Homo sapiens (Human).